The primary structure comprises 132 residues: Small ribosomal subunit protein uS8 (132 aa).

This sequence belongs to the universal ribosomal protein uS8 family. In terms of assembly, part of the 30S ribosomal subunit. Contacts proteins S5 and S12.

Its function is as follows. One of the primary rRNA binding proteins, it binds directly to 16S rRNA central domain where it helps coordinate assembly of the platform of the 30S subunit. The chain is Small ribosomal subunit protein uS8 from Staphylococcus carnosus (strain TM300).